Reading from the N-terminus, the 610-residue chain is Zinc metalloproteinase-disintegrin-like bothropasin (610 aa).

Residues 1-20 (MIEVLLVTICLAAFPYQGSS) form the signal peptide. A propeptide spanning residues 21–191 (IILESGNVND…ASQLVVTAEQ (171 aa)) is cleaved from the precursor. Position 192 is a pyrrolidone carboxylic acid (glutamine 192). The region spanning 198-394 (RYVELFIVVD…ENPQCILNEP (197 aa)) is the Peptidase M12B domain. The Ca(2+) site is built by glutamate 201 and aspartate 285. Intrachain disulfides connect cysteine 309/cysteine 389, cysteine 349/cysteine 373, and cysteine 351/cysteine 356. Histidine 334 contributes to the Zn(2+) binding site. The active site involves glutamate 335. 2 residues coordinate Zn(2+): histidine 338 and histidine 344. Asparagine 372 carries N-linked (GlcNAc...) asparagine glycosylation. Residues cysteine 389, asparagine 392, valine 404, asparagine 407, leucine 409, glutamate 411, glutamate 414, and aspartate 417 each contribute to the Ca(2+) site. The Disintegrin domain occupies 402–488 (PPVCGNELLE…ECPADVFHKN (87 aa)). 22 disulfides stabilise this stretch: cysteine 405/cysteine 424, cysteine 405/cysteine 434, cysteine 416/cysteine 429, cysteine 416/cysteine 434, cysteine 418/cysteine 424, cysteine 428/cysteine 451, cysteine 442/cysteine 448, cysteine 447/cysteine 473, cysteine 460/cysteine 480, cysteine 467/cysteine 492, cysteine 467/cysteine 499, cysteine 492/cysteine 504, cysteine 499/cysteine 504, cysteine 511/cysteine 526, cysteine 511/cysteine 561, cysteine 526/cysteine 572, cysteine 539/cysteine 549, cysteine 549/cysteine 556, cysteine 556/cysteine 598, cysteine 561/cysteine 572, cysteine 592/cysteine 603, and cysteine 598/cysteine 603. Positions 466–468 (ECD) match the D/ECD-tripeptide motif. Ca(2+)-binding residues include aspartate 468, proline 469, glutamate 471, aspartate 483, and valine 484.

This sequence belongs to the venom metalloproteinase (M12B) family. P-III subfamily. P-IIIb sub-subfamily. Monomer. Requires Zn(2+) as cofactor. Expressed by the venom gland.

The protein localises to the secreted. The catalysed reaction is Cleavage of 5-His-|-Leu-6, 10-His-|-Leu-11, 14-Ala-|-Leu-15, 16-Tyr-|-Leu-17 and 24-Phe-|-Phe-25 in insulin B chain.. With respect to regulation, inhibited by EDTA and EGTA. Has caseinolytic activity. Causes hemorrhage on rabbit skin and causes myonecrosis in mouse tibialis anterior muscle. Functionally, inhibits platelet aggregation. This chain is Zinc metalloproteinase-disintegrin-like bothropasin, found in Bothrops jararaca (Jararaca).